Here is a 371-residue protein sequence, read N- to C-terminus: Deoxyuridine 5'-triphosphate nucleotidohydrolase (371 aa).

Substrate is bound by residues 260 to 262 (RSS) and 366 to 367 (FG). Residues 350–371 (NEFDAEAPPSERGTGGFGSTGI) are disordered. A compositionally biased stretch (gly residues) spans 362-371 (GTGGFGSTGI).

The protein belongs to the dUTPase family. It depends on Mg(2+) as a cofactor.

The catalysed reaction is dUTP + H2O = dUMP + diphosphate + H(+). Its function is as follows. Involved in nucleotide metabolism: produces dUMP, the immediate precursor of thymidine nucleotides and decreases the intracellular concentration of dUTP to avoid uracil incorporation into viral DNA. This Homo sapiens (Human) protein is Deoxyuridine 5'-triphosphate nucleotidohydrolase.